A 148-amino-acid polypeptide reads, in one-letter code: uncharacterized protein (148 aa).

The region spanning 4 to 65 (LDKVDIQLVK…IPDLDKLGYM (62 aa)) is the HTH asnC-type domain. Positions 23–42 (YRELAELMNTTRQRIARRIT) form a DNA-binding region, H-T-H motif.

This is an uncharacterized protein from Pyrococcus abyssi (strain GE5 / Orsay).